The sequence spans 206 residues: Small ribosomal subunit protein uS4 (206 aa).

One can recognise an S4 RNA-binding domain in the interval 96 to 156 (SRLDNVVYRM…EKSRNQSRIA (61 aa)).

It belongs to the universal ribosomal protein uS4 family. In terms of assembly, part of the 30S ribosomal subunit. Contacts protein S5. The interaction surface between S4 and S5 is involved in control of translational fidelity.

One of the primary rRNA binding proteins, it binds directly to 16S rRNA where it nucleates assembly of the body of the 30S subunit. Its function is as follows. With S5 and S12 plays an important role in translational accuracy. The sequence is that of Small ribosomal subunit protein uS4 from Hydrogenovibrio crunogenus (strain DSM 25203 / XCL-2) (Thiomicrospira crunogena).